Here is a 543-residue protein sequence, read N- to C-terminus: uncharacterized protein (543 aa).

A Radical SAM core domain is found at 203 to 460 (NYPYIIAEIE…FLWFKEKVRE (258 aa)). One can recognise a TRAM domain in the interval 470–534 (VVPKGTILRD…RRSITGKVVR (65 aa)).

This is an uncharacterized protein from Methanocaldococcus jannaschii (strain ATCC 43067 / DSM 2661 / JAL-1 / JCM 10045 / NBRC 100440) (Methanococcus jannaschii).